Reading from the N-terminus, the 563-residue chain is Tripeptidyl-peptidase 1 (563 aa).

The first 19 residues, 1–19 (MGPRSGLLGLFALFVAGKC), serve as a signal peptide directing secretion. The propeptide at 20–195 (SYSPEPDQQR…PEPQVPGTVG (176 aa)) is removed in mature form. A disulfide bridge links Cys-111 with Cys-122. The Peptidase S53 domain maps to 199–563 (GVTPSVIRKR…PALLKTLMNP (365 aa)). 2 N-linked (GlcNAc...) asparagine glycosylation sites follow: Asn-210 and Asn-222. Catalysis depends on charge relay system residues Glu-272 and Asp-276. N-linked (GlcNAc...) asparagine glycans are attached at residues Asn-286, Asn-313, and Asn-443. Cystine bridges form between Cys-365–Cys-526 and Cys-522–Cys-537. Ser-475 acts as the Charge relay system in catalysis. Ca(2+)-binding residues include Asp-517 and Val-518. The Ca(2+) site is built by Gly-539, Gly-541, and Asp-543.

As to quaternary structure, monomer. Interacts with CLN5. Interacts with CLN3. The cofactor is Ca(2+). In terms of processing, activated by autocatalytic proteolytical processing upon acidification. N-glycosylation is required for processing and activity.

It localises to the lysosome. The protein resides in the melanosome. It catalyses the reaction Release of an N-terminal tripeptide from a polypeptide, but also has endopeptidase activity.. Functionally, lysosomal serine protease with tripeptidyl-peptidase I activity. May act as a non-specific lysosomal peptidase which generates tripeptides from the breakdown products produced by lysosomal proteinases. Requires substrates with an unsubstituted N-terminus. This chain is Tripeptidyl-peptidase 1 (TPP1), found in Bos taurus (Bovine).